A 725-amino-acid polypeptide reads, in one-letter code: Catalase-peroxidase (725 aa).

Residues 99–227 (WHAAGTYRIA…LAAVMMGLIY (129 aa)) constitute a cross-link (tryptophyl-tyrosyl-methioninium (Trp-Tyr) (with M-253)). Residue His100 is the Proton acceptor of the active site. A cross-link (tryptophyl-tyrosyl-methioninium (Tyr-Met) (with W-99)) is located at residues 227 to 253 (YVNPEGVDGNPDPLKTAHDIRITFSRM). His268 is a binding site for heme b.

It belongs to the peroxidase family. Peroxidase/catalase subfamily. In terms of assembly, homodimer or homotetramer. Heme b is required as a cofactor. Post-translationally, formation of the three residue Trp-Tyr-Met cross-link is important for the catalase, but not the peroxidase activity of the enzyme.

It catalyses the reaction H2O2 + AH2 = A + 2 H2O. It carries out the reaction 2 H2O2 = O2 + 2 H2O. Bifunctional enzyme with both catalase and broad-spectrum peroxidase activity. This chain is Catalase-peroxidase, found in Picosynechococcus sp. (strain ATCC 27264 / PCC 7002 / PR-6) (Agmenellum quadruplicatum).